The chain runs to 128 residues: Sm-like protein LSM1A (128 aa).

A Sm domain is found at 10 to 85; sequence FFSTSLAAYL…VVLIGELDVE (76 aa).

This sequence belongs to the snRNP Sm proteins family. In terms of assembly, component of the heptameric LSM1-LSM7 complex that forms a seven-membered ring structure with a donut shape. The LSM subunits are arranged in the order LSM1, LSM2, LSM3, LSM6, LSM5, LSM7 and LSM4. LSM1A subunit interacts only with its two neighboring subunits, LSM2 and LSM4. Expressed in roots, leaves, stems, flowers and siliques.

It localises to the cytoplasm. The protein resides in the P-body. In terms of biological role, component of the cytoplasmic LSM1-LSM7 complex which is involved in mRNA degradation by promoting decapping and leading to accurate 5'-3' mRNA decay. LSM1A and LSM1B are essential for the formation of the cytoplasmic LSM1-LSM7 complex which regulates developmental gene expression by the decapping of specific development-related transcripts. Required for P-body formation during heat stress. This chain is Sm-like protein LSM1A, found in Arabidopsis thaliana (Mouse-ear cress).